The sequence spans 995 residues: KN motif and ankyrin repeat domain-containing protein 4 (995 aa).

Disordered stretches follow at residues 1–29 and 68–127; these read MEKT…SVET and TLPR…EVSY. The span at 101–124 shows a compositional bias: polar residues; it reads LGTQEQNQSPPLGNAPQASTSRSE. Positions 343–404 form a coiled coil; it reads SSLKQQVSAL…EGQFHQENAK (62 aa). Disordered stretches follow at residues 443–467, 503–558, 617–642, 663–705, and 721–740; these read ESWG…GNQS, EAGT…PTDA, QAHP…TSLK, LQFV…PDHK, and PEGT…VPHS. The segment covering 511–523 has biased composition (gly residues); it reads GPQGGTRGAGGFL. Basic and acidic residues predominate over residues 526–549; that stretch reads SDRKTPPAGREETSSNLPGKEHPG. Residues 625-640 are compositionally biased toward low complexity; it reads PASSSSPPVEISPSTS. Residues 680 to 693 show a composition bias toward acidic residues; it reads TSGEDSTPEDLSDS. Positions 694–705 are enriched in basic and acidic residues; it reads EAEKKCDGPDHK. ANK repeat units lie at residues 823-853, 862-890, 895-924, 928-958, and 962-992; these read NGNT…NVDH, VMIT…NVNI, GGQT…DVNL, DGSS…DSSL, and AGRT…QGRS.

As to expression, strongly expressed in colon, liver, lung, skeletal muscle and kidney.

The protein localises to the cytoplasm. Its function is as follows. May be involved in the control of cytoskeleton formation by regulating actin polymerization. This chain is KN motif and ankyrin repeat domain-containing protein 4 (KANK4), found in Homo sapiens (Human).